A 668-amino-acid chain; its full sequence is Ubiquitin ligase complex F-box protein UFO1 (668 aa).

Residues 5–51 enclose the F-box domain; the sequence is GLVLQDLPPEILINIFSHLDEKDLFTLQELSTHFRNLIHDEELWKNL. Phosphoserine is present on Ser-511. Thr-514 bears the Phosphothreonine mark. UIM domains are found at residues 547–566, 583–602, and 651–668; these read DEDEQLRRALEESQLIYETQ, EDDEEFLRAIRQSRVEDERR, and NVDEDLQLAIALSLSEIN. The span at 564–578 shows a compositional bias: polar residues; that stretch reads ETQTNSSANHGNNTN. Disordered regions lie at residues 564-585 and 599-639; these read ETQTNSSANHGNNTNDEIDEDD and DERR…TENT.

Interacts with SKP1. Component of the probable SCF(UFO1) complex containing CDC53, SKP1, RBX1 and UFO1.

The protein operates within protein modification; protein ubiquitination. In terms of biological role, substrate recognition component of a SCF (SKP1-CUL1-F-box protein) E3 ubiquitin-protein ligase complex which mediates the ubiquitination and subsequent proteasomal degradation of target proteins. Probably recognizes and binds to phosphorylated target proteins. The sequence is that of Ubiquitin ligase complex F-box protein UFO1 (UFO1) from Saccharomyces cerevisiae (strain ATCC 204508 / S288c) (Baker's yeast).